Consider the following 405-residue polypeptide: Terpene cyclase pbrA (405 aa).

Mg(2+) is bound by residues D103, E168, N229, S233, E237, and D241. The D(D/E)XX(D/E) motif signature appears at 103-108 (DDEISS). An NSE motif motif is present at residues 227–237 (LVNDLFSFYKE). Positions 316–323 (EDLGGSSA) match the WxxxxxRY motif motif.

Belongs to the trichodiene synthase family. It depends on Mg(2+) as a cofactor.

It functions in the pathway secondary metabolite biosynthesis; terpenoid biosynthesis. Terpene cyclase; part of the gene cluster that mediates the biosynthesis of the sesquiterpenoid aspterric acid (AA), an inhibitor of dihydroxy-acid dehydratase (DHAD) effective as an herbicide. PbrA cyclizes farnesyl diphosphate (FPP) to produce (-)-daucane. The cytochrome P450 monooxygenase pbrBB then converts (-)-daucane into the alpha-epoxy carboxylate intermediate which is further converted into the tricyclic aspterric acid by the cytochrome P450 monooxygenase pbrC. This Penicillium brasilianum protein is Terpene cyclase pbrA.